A 584-amino-acid chain; its full sequence is DNA damage-binding protein CMR1 (584 aa).

The span at 29 to 44 (SATDSISREIPNQRQA) shows a compositional bias: polar residues. A disordered region spans residues 29 to 90 (SATDSISREI…TEEYQKVKEE (62 aa)). Residues 59–68 (IKKEPQEPSR) are compositionally biased toward basic and acidic residues. Residues 76–110 (VTMENTEEYQKVKEEMEEAERKKKELEKLKSTRLF) adopt a coiled-coil conformation. WD repeat units lie at residues 226–267 (ITHQ…DEDP), 274–314 (PHGR…SSEV), 373–413 (LHDK…KSNS), 431–469 (SSRL…SELP), 506–549 (GRWV…LAHL), and 553–584 (EKVG…YLFE).

This sequence belongs to the WD repeat DDB2/WDR76 family.

Its function is as follows. DNA-binding protein that binds to both single- and double-stranded DNA. Binds preferentially to UV-damaged DNA. May be involved in DNA-metabolic processes. The polypeptide is DNA damage-binding protein CMR1 (Debaryomyces hansenii (strain ATCC 36239 / CBS 767 / BCRC 21394 / JCM 1990 / NBRC 0083 / IGC 2968) (Yeast)).